The following is a 122-amino-acid chain: UPF0231 protein VV1_1657 (122 aa).

Belongs to the UPF0231 family.

This chain is UPF0231 protein VV1_1657, found in Vibrio vulnificus (strain CMCP6).